Here is a 104-residue protein sequence, read N- to C-terminus: UPF0145 protein DET1617 (104 aa).

It belongs to the UPF0145 family.

This is UPF0145 protein DET1617 from Dehalococcoides mccartyi (strain ATCC BAA-2266 / KCTC 15142 / 195) (Dehalococcoides ethenogenes (strain 195)).